A 271-amino-acid polypeptide reads, in one-letter code: uncharacterized protein (271 aa).

Residues 233-261 (VEPDPNRFSEPVDQPTLVEEGKEARRTER) form a disordered region. Residues 251-261 (EEGKEARRTER) show a composition bias toward basic and acidic residues.

In terms of biological role, may be involved in swimming motility. This is an uncharacterized protein from Haloferax volcanii (strain ATCC 29605 / DSM 3757 / JCM 8879 / NBRC 14742 / NCIMB 2012 / VKM B-1768 / DS2) (Halobacterium volcanii).